A 259-amino-acid polypeptide reads, in one-letter code: Deoxyribose-phosphate aldolase (259 aa).

The active-site Proton donor/acceptor is Asp-102. Lys-167 functions as the Schiff-base intermediate with acetaldehyde in the catalytic mechanism. Residue Lys-201 is the Proton donor/acceptor of the active site.

This sequence belongs to the DeoC/FbaB aldolase family. DeoC type 2 subfamily.

The protein resides in the cytoplasm. It catalyses the reaction 2-deoxy-D-ribose 5-phosphate = D-glyceraldehyde 3-phosphate + acetaldehyde. The protein operates within carbohydrate degradation; 2-deoxy-D-ribose 1-phosphate degradation; D-glyceraldehyde 3-phosphate and acetaldehyde from 2-deoxy-alpha-D-ribose 1-phosphate: step 2/2. Its function is as follows. Catalyzes a reversible aldol reaction between acetaldehyde and D-glyceraldehyde 3-phosphate to generate 2-deoxy-D-ribose 5-phosphate. The polypeptide is Deoxyribose-phosphate aldolase (Salmonella typhi).